Reading from the N-terminus, the 83-residue chain is Scyreptin (83 aa).

Cationic antimicrobial peptide that exhibits a potent and broad-spectrum antimicrobial activity against both bacteria and fungi, as well as against the multidrug-resistant bacteria P.aeruginosa. Exhibits rapid bactericidal kinetic. Acts by destroying the integrity of bacterial membranes, leading to bacterial death. Also exhibits potent anti-biofilm activity against P.aeruginosa. Shows high thermal stability and ion tolerance, as it maintains antibacterial activity even when heated to 100 degrees Celsius for 30 minutes and in presence of high levels of NaCl, CaCl(2) and MgCl(2). Does not show cytotoxicity and hemolytic activity. In a mouse model of burn infection, exhibits a remarkably reduction in the bacterial load caused by multidrug-resistant P.aeruginosa at the site of infection, and promotes wound healing. The sequence is that of Scyreptin from Scylla paramamosain (Mud crab).